Consider the following 760-residue polypeptide: Xaa-Pro dipeptidyl-peptidase (760 aa).

Residues Ser-349, Asp-469, and His-499 each act as charge relay system in the active site.

It belongs to the peptidase S15 family. In terms of assembly, homodimer.

It is found in the cytoplasm. It catalyses the reaction Hydrolyzes Xaa-Pro-|- bonds to release unblocked, N-terminal dipeptides from substrates including Ala-Pro-|-p-nitroanilide and (sequentially) Tyr-Pro-|-Phe-Pro-|-Gly-Pro-|-Ile.. Its function is as follows. Removes N-terminal dipeptides sequentially from polypeptides having unsubstituted N-termini provided that the penultimate residue is proline. The polypeptide is Xaa-Pro dipeptidyl-peptidase (Streptococcus pyogenes serotype M4 (strain MGAS10750)).